A 546-amino-acid chain; its full sequence is Acyl-CoA ligase oryP (546 aa).

Residues 166-174 (TSGTTGAPK), 300-305 (QFWLNL), and Arg-403 contribute to the ATP site. Residues 412 to 414 (WDH) and 482 to 484 (LLR) contribute to the CoA site. Lys-499 is an ATP binding site.

It belongs to the ATP-dependent AMP-binding enzyme family.

It participates in secondary metabolite biosynthesis. Its function is as follows. Acyl-CoA ligase; part of the gene cluster that mediates the biosynthesis of oryzines, natural products with an unusual maleidride backbone. The two subunits of the fungal fatty acid synthase oryfasA and oryfasB probably form octenoic acid. This fatty acid is most likely activated by the acyl-CoA ligase oryP to give octenyl-CoA before the citrate synthase-like protein oryE catalyzes condensation with oxaloacetate to form tricarboxylic acid. The next steps of the pathways are conjectural, but a favorite possible route has been proposed, beginning with decarboxylation and concomitant dehydration by the decarboxylase oryM, followed by tautomerization, which may lead to the production of a diene intermediate. Reduction of this diene intermediate could give the known metabolite piliformic acid. On the pathway to oryzine B and oryzine A, however, hydroxylation of the diene by the alpha-ketoglutarate-dependent dioxygenase oryG and lactonisation by the lactonohydrolases oryH or oryL could give oryzine B directly. Finally, enoyl reduction by the dehydrogenase oryD would then convert oryzine B into oryzine A. This Aspergillus oryzae (strain ATCC 42149 / RIB 40) (Yellow koji mold) protein is Acyl-CoA ligase oryP.